The chain runs to 153 residues: UPF0768 protein PB2B2.18 (153 aa).

It belongs to the UPF0768 family.

The sequence is that of UPF0768 protein PB2B2.18 from Schizosaccharomyces pombe (strain 972 / ATCC 24843) (Fission yeast).